A 155-amino-acid chain; its full sequence is 17.6 kDa class II heat shock protein (155 aa).

The 118-residue stretch at 38–155 (DAKAMAATPA…KPKTIQVQVA (118 aa)) folds into the sHSP domain.

The protein belongs to the small heat shock protein (HSP20) family. In terms of assembly, may form oligomeric structures.

Its subcellular location is the cytoplasm. This is 17.6 kDa class II heat shock protein (HSP17.6) from Arabidopsis thaliana (Mouse-ear cress).